The primary structure comprises 370 residues: Cytochrome b (370 aa).

The next 4 helical transmembrane spans lie at 25–45, 69–90, 105–125, and 170–190; these read FGSM…FLAV, WMMQ…YIHI, WLSG…GYVL, and FFAL…LHIL. Residues His-75 and His-89 each coordinate heme b. Heme b-binding residues include His-174 and His-188. His-193 provides a ligand contact to a ubiquinone. Transmembrane regions (helical) follow at residues 218–238, 280–300, 312–332, and 339–358; these read YKDM…VSFF, LGGA…PFTH, LMQL…WTAT, and FTTI…ISNP.

The protein belongs to the cytochrome b family. In terms of assembly, the cytochrome bc1 complex contains 3 respiratory subunits (MT-CYB, CYC1 and UQCRFS1), 2 core proteins (UQCRC1 and UQCRC2) and probably 6 low-molecular weight proteins. It depends on heme b as a cofactor.

Its subcellular location is the mitochondrion inner membrane. Functionally, component of the ubiquinol-cytochrome c reductase complex (complex III or cytochrome b-c1 complex) that is part of the mitochondrial respiratory chain. The b-c1 complex mediates electron transfer from ubiquinol to cytochrome c. Contributes to the generation of a proton gradient across the mitochondrial membrane that is then used for ATP synthesis. This chain is Cytochrome b (MT-CYB), found in Chilabothrus strigilatus strigilatus (New Providence boa constrictor).